The sequence spans 395 residues: S-adenosylmethionine synthase (395 aa).

His-18 contacts ATP. Asp-20 provides a ligand contact to Mg(2+). Glu-46 lines the K(+) pocket. Glu-59 and Gln-103 together coordinate L-methionine. Residues 103–113 (QSADIAVGVDS) form a flexible loop region. ATP is bound by residues 170 to 172 (DAK), 235 to 236 (KF), Asp-244, 250 to 251 (RK), Ala-267, and Lys-271. Asp-244 contacts L-methionine. An L-methionine-binding site is contributed by Lys-275.

This sequence belongs to the AdoMet synthase family. As to quaternary structure, homotetramer; dimer of dimers. Mg(2+) serves as cofactor. It depends on K(+) as a cofactor.

It is found in the cytoplasm. It catalyses the reaction L-methionine + ATP + H2O = S-adenosyl-L-methionine + phosphate + diphosphate. It participates in amino-acid biosynthesis; S-adenosyl-L-methionine biosynthesis; S-adenosyl-L-methionine from L-methionine: step 1/1. Catalyzes the formation of S-adenosylmethionine (AdoMet) from methionine and ATP. The overall synthetic reaction is composed of two sequential steps, AdoMet formation and the subsequent tripolyphosphate hydrolysis which occurs prior to release of AdoMet from the enzyme. The polypeptide is S-adenosylmethionine synthase (Granulibacter bethesdensis (strain ATCC BAA-1260 / CGDNIH1)).